The primary structure comprises 452 residues: PTS system N-acetylglucosamine-specific EIICB component (452 aa).

Positions 1 to 361 (MLSFLQKLGK…LNLKTPGRED (361 aa)) constitute a PTS EIIC type-1 domain. 9 helical membrane passes run 8-28 (LGKS…ILAL), 42-62 (AGTA…AIGI), 91-111 (TNNM…YTYN), 130-150 (LVPI…GVVW), 163-183 (WMLG…RLLI), 223-243 (MTGF…AMVV), 257-277 (MIGF…EFAF), 279-299 (FLSP…LFIV), and 329-349 (LLLL…YVLI). A PTS EIIB type-1 domain is found at 375–452 (DVNENIMLKG…AAEELRAAVK (78 aa)). The active-site Phosphocysteine intermediate; for EIIB activity is the cysteine 397.

As to quaternary structure, interacts with FloT.

The protein resides in the cell membrane. It localises to the membrane raft. The enzyme catalyses N(pros)-phospho-L-histidyl-[protein] + N-acetyl-D-glucosamine(out) = N-acetyl-D-glucosamine 6-phosphate(in) + L-histidyl-[protein]. Its function is as follows. The phosphoenolpyruvate-dependent sugar phosphotransferase system (sugar PTS), a major carbohydrate active -transport system, catalyzes the phosphorylation of incoming sugar substrates concomitantly with their translocation across the cell membrane. This system is involved in N-acetylglucosamine transport. This Bacillus subtilis (strain 168) protein is PTS system N-acetylglucosamine-specific EIICB component (nagP).